Here is a 102-residue protein sequence, read N- to C-terminus: Large ribosomal subunit protein uL24 (102 aa).

It belongs to the universal ribosomal protein uL24 family. In terms of assembly, part of the 50S ribosomal subunit.

One of two assembly initiator proteins, it binds directly to the 5'-end of the 23S rRNA, where it nucleates assembly of the 50S subunit. Functionally, one of the proteins that surrounds the polypeptide exit tunnel on the outside of the subunit. This chain is Large ribosomal subunit protein uL24, found in Cupriavidus necator (strain ATCC 17699 / DSM 428 / KCTC 22496 / NCIMB 10442 / H16 / Stanier 337) (Ralstonia eutropha).